We begin with the raw amino-acid sequence, 222 residues long: Peptide methionine sulfoxide reductase MsrA (222 aa).

Cysteine 60 is a catalytic residue.

The protein belongs to the MsrA Met sulfoxide reductase family.

It carries out the reaction L-methionyl-[protein] + [thioredoxin]-disulfide + H2O = L-methionyl-(S)-S-oxide-[protein] + [thioredoxin]-dithiol. It catalyses the reaction [thioredoxin]-disulfide + L-methionine + H2O = L-methionine (S)-S-oxide + [thioredoxin]-dithiol. In terms of biological role, has an important function as a repair enzyme for proteins that have been inactivated by oxidation. Catalyzes the reversible oxidation-reduction of methionine sulfoxide in proteins to methionine. The sequence is that of Peptide methionine sulfoxide reductase MsrA from Pseudomonas entomophila (strain L48).